Here is a 352-residue protein sequence, read N- to C-terminus: Chorismate synthase (352 aa).

Arg48 contributes to the NADP(+) binding site. Residues 125-127 (RSS), 238-239 (NA), Gly278, 293-297 (KPTSS), and Arg319 contribute to the FMN site.

The protein belongs to the chorismate synthase family. In terms of assembly, homotetramer. FMNH2 is required as a cofactor.

The catalysed reaction is 5-O-(1-carboxyvinyl)-3-phosphoshikimate = chorismate + phosphate. Its pathway is metabolic intermediate biosynthesis; chorismate biosynthesis; chorismate from D-erythrose 4-phosphate and phosphoenolpyruvate: step 7/7. Catalyzes the anti-1,4-elimination of the C-3 phosphate and the C-6 proR hydrogen from 5-enolpyruvylshikimate-3-phosphate (EPSP) to yield chorismate, which is the branch point compound that serves as the starting substrate for the three terminal pathways of aromatic amino acid biosynthesis. This reaction introduces a second double bond into the aromatic ring system. In Legionella pneumophila (strain Paris), this protein is Chorismate synthase.